We begin with the raw amino-acid sequence, 382 residues long: Glycerate dehydrogenase (382 aa).

Residues 175–176, 271–273, and aspartate 297 each bind NAD(+); these read RI and CSR. The active site involves arginine 273. Glutamate 302 is a catalytic residue. Catalysis depends on histidine 320, which acts as the Proton donor. 320 to 323 lines the NAD(+) pocket; the sequence is HIAS.

It belongs to the D-isomer specific 2-hydroxyacid dehydrogenase family.

The protein resides in the peroxisome. The catalysed reaction is (R)-glycerate + NAD(+) = 3-hydroxypyruvate + NADH + H(+). The protein operates within photosynthesis; photorespiration; 3-phospho-D-glycerate from glycine: step 3/4. In Cucumis sativus (Cucumber), this protein is Glycerate dehydrogenase (HPR-A).